We begin with the raw amino-acid sequence, 760 residues long: General transcription and DNA repair factor IIH helicase subunit XPD (760 aa).

A Helicase ATP-binding domain is found at 7 to 283 (GLLVYFPYDY…KETDEQRLRD (277 aa)). Residue 42 to 49 (MPSGTGKT) coordinates ATP. Residues Cys116, Cys134, Cys155, and Cys190 each coordinate [4Fe-4S] cluster. The DEAH box motif lies at 234–237 (DEAH). The interval 438-637 (MDASLAIKPV…TQSRILKARL (200 aa)) is mediates interaction with MMS19. Residues 682–695 (KRFARGDKRGKLPR) carry the Nuclear localization signal motif.

It belongs to the helicase family. RAD3/XPD subfamily. In terms of assembly, component of the 7-subunit TFIIH core complex composed of XPB/ERCC3, XPD/ERCC2, GTF2H1, GTF2H2, GTF2H3, GTF2H4 and GTF2H5, which is active in NER. The core complex associates with the 3-subunit CDK-activating kinase (CAK) module composed of CCNH/cyclin H, CDK7 and MNAT1 to form the 10-subunit holoenzyme (holo-TFIIH) active in transcription. Interacts with GTF2H2 (p44) which stimulates the 5'-3' helicase activity of this subunit. Component of the MMXD complex, which includes CIAO1, ERCC2, CIAO2B, MMS19 and SLC25A5. Interacts with CIAO1 and CIAO2B; the interaction WITH CIAO2B is direct. Interacts with ATF7IP. Interacts directly with MMS19. Part of TBP-based Pol II pre-initiation complex (PIC), in which Pol II core assembles with general transcription factors and other specific initiation factors including GTF2E1, GTF2E2, GTF2F1, GTF2F2, TCEA1, ERCC2, ERCC3, GTF2H2, GTF2H3, GTF2H4, GTF2H5, GTF2A1, GTF2A2, GTF2B and TBP; this large multi-subunit PIC complex mediates DNA unwinding and targets Pol II core to the transcription start site where the first phosphodiester bond forms. As to quaternary structure, (Microbial infection) Interacts with Epstein-Barr virus EBNA2. Mg(2+) is required as a cofactor. It depends on [4Fe-4S] cluster as a cofactor. In terms of processing, ISGylated.

The protein localises to the nucleus. It localises to the cytoplasm. It is found in the cytoskeleton. Its subcellular location is the spindle. The enzyme catalyses Couples ATP hydrolysis with the unwinding of duplex DNA at the replication fork by translocating in the 5'-3' direction. This creates two antiparallel DNA single strands (ssDNA). The leading ssDNA polymer is the template for DNA polymerase III holoenzyme which synthesizes a continuous strand.. The catalysed reaction is ATP + H2O = ADP + phosphate + H(+). Interaction with GTF2H2 (p44) results in stimulation of the 5'-3' helicase activity of this subunit. DNA unwinding by this subunit in TFIIH is stimulated 4-fold by XPA and 20-fold by ERCC5/XPG. ATP-dependent 5'-3' DNA helicase. Component of the general transcription and DNA repair factor IIH (TFIIH) core complex, not absolutely essential for minimal transcription in vitro. Required for transcription-coupled nucleotide excision repair (NER) of damaged DNA; recognizes damaged bases. Sequestered in chromatin on UV-damaged DNA. When complexed to CDK-activating kinase (CAK), involved in transcription by RNA polymerase II. In NER, TFIIH acts by opening DNA around the lesion to allow the excision of the damaged oligonucleotide and its replacement by a new DNA fragment. The ATP-dependent helicase activity of XPD/ERCC2 is required for DNA opening. Involved in DNA lesion verification. In transcription, TFIIH has an essential role in transcription initiation. When the pre-initiation complex (PIC) has been established, TFIIH is required for promoter opening and promoter escape. Phosphorylation of the C-terminal tail (CTD) of the largest subunit of RNA polymerase II by the kinase module CAK controls the initiation of transcription. XPD/ERCC2 acts by forming a bridge between CAK and the core-TFIIH complex. The structure of the TFIIH transcription complex differs from the NER-TFIIH complex; large movements by XPD/ERCC2 and XPB/ERCC3 are stabilized by XPA which allow this subunit to contact ssDNA. Involved in the regulation of vitamin-D receptor activity. As part of the mitotic spindle-associated MMXD complex it plays a role in chromosome segregation. Might have a role in aging process and could play a causative role in the generation of skin cancers. This Homo sapiens (Human) protein is General transcription and DNA repair factor IIH helicase subunit XPD (ERCC2).